The chain runs to 389 residues: MDLFEYQARDMFEAHGVPVLAGIVAHTPEEAKAAAEKIGGVTVVKAQVKVGGRGKAGGVKVAKTAEEALEHSTNILGMDIKGHTVNKVMIAQGADIAEEFYFSVLLDRANRNYLAMCSVEGGMEIEQLAVERPEALAKIAIDPAVGIDQAKADEIVAAAGFAEELRGKVADVILKLWDVFKKEDATLVEVNPLVRTGAGEIVALDGKVSLDENADFRHVHHAHLEDKDAADPLEAKAKAQDLNYVKLDGEVGIIGNGAGLVMSTLDVVAYAGENHGNVKPANFLDIGGGASAEVMANGLDVILGDSQVKSVFVNVFGGITACDAVAKGIVGALAELGSSANKPLVVRLDGNNVEEGRRILTEANHPLVTLAATMDEGADKAAELANAAK.

One can recognise an ATP-grasp domain in the interval 9-236 (RDMFEAHGVP…KDAADPLEAK (228 aa)). Residues lysine 45, 52–54 (GRG), alanine 94, and glutamate 99 contribute to the ATP site. The Mg(2+) site is built by asparagine 191 and aspartate 205. Residues asparagine 256 and 318–320 (GIT) contribute to the substrate site.

Belongs to the succinate/malate CoA ligase beta subunit family. As to quaternary structure, heterotetramer of two alpha and two beta subunits. The cofactor is Mg(2+).

It catalyses the reaction succinate + ATP + CoA = succinyl-CoA + ADP + phosphate. The enzyme catalyses GTP + succinate + CoA = succinyl-CoA + GDP + phosphate. The protein operates within carbohydrate metabolism; tricarboxylic acid cycle; succinate from succinyl-CoA (ligase route): step 1/1. In terms of biological role, succinyl-CoA synthetase functions in the citric acid cycle (TCA), coupling the hydrolysis of succinyl-CoA to the synthesis of either ATP or GTP and thus represents the only step of substrate-level phosphorylation in the TCA. The beta subunit provides nucleotide specificity of the enzyme and binds the substrate succinate, while the binding sites for coenzyme A and phosphate are found in the alpha subunit. The polypeptide is Succinate--CoA ligase [ADP-forming] subunit beta (Paenarthrobacter aurescens (strain TC1)).